The sequence spans 350 residues: Biotin synthase (350 aa).

A compositionally biased stretch (polar residues) spans 1-13 (MVTQAATRPSNDA). The segment at 1–20 (MVTQAATRPSNDAGQDGVTE) is disordered. In terms of domain architecture, Radical SAM core spans 71-296 (PEVEVEGIIS…RTMLRFAGGR (226 aa)). [4Fe-4S] cluster-binding residues include Cys86, Cys90, and Cys93. The [2Fe-2S] cluster site is built by Cys129, Cys162, Cys221, and Arg291.

It belongs to the radical SAM superfamily. Biotin synthase family. Homodimer. Requires [4Fe-4S] cluster as cofactor. [2Fe-2S] cluster is required as a cofactor.

It catalyses the reaction (4R,5S)-dethiobiotin + (sulfur carrier)-SH + 2 reduced [2Fe-2S]-[ferredoxin] + 2 S-adenosyl-L-methionine = (sulfur carrier)-H + biotin + 2 5'-deoxyadenosine + 2 L-methionine + 2 oxidized [2Fe-2S]-[ferredoxin]. It functions in the pathway cofactor biosynthesis; biotin biosynthesis; biotin from 7,8-diaminononanoate: step 2/2. Catalyzes the conversion of dethiobiotin (DTB) to biotin by the insertion of a sulfur atom into dethiobiotin via a radical-based mechanism. The polypeptide is Biotin synthase (Mycobacterium ulcerans (strain Agy99)).